A 436-amino-acid polypeptide reads, in one-letter code: Serine/threonine-protein kinase 40 (436 aa).

A compositionally biased stretch (basic and acidic residues) spans 1–10 (MKRRASDRGA). A disordered region spans residues 1–25 (MKRRASDRGAGETSARAKALGSGIS). In terms of domain architecture, Protein kinase spans 35–332 (FILGPRLGNS…DVLEALSSII (298 aa)). ATP is bound by residues 41-49 (LGNSPVPSI) and Lys66. Asp197 serves as the catalytic Proton acceptor. Residues 396 to 417 (RSWVPKRQSGAGVPPVRRLGHD) are disordered.

It belongs to the protein kinase superfamily. CAMK Ser/Thr protein kinase family.

The protein localises to the nucleus. The protein resides in the cytoplasm. The enzyme catalyses L-seryl-[protein] + ATP = O-phospho-L-seryl-[protein] + ADP + H(+). It carries out the reaction L-threonyl-[protein] + ATP = O-phospho-L-threonyl-[protein] + ADP + H(+). Its function is as follows. May be a negative regulator of NF-kappa-B and p53-mediated gene transcription. The sequence is that of Serine/threonine-protein kinase 40 (STK40) from Bos taurus (Bovine).